Here is a 441-residue protein sequence, read N- to C-terminus: tRNA modification GTPase MnmE (441 aa).

Residues Arg-23, Glu-81, and Arg-121 each contribute to the (6S)-5-formyl-5,6,7,8-tetrahydrofolate site. The TrmE-type G domain maps to 219-366; the sequence is GFTVVLAGAP…LLDAIQAAAE (148 aa). GTP-binding positions include 229 to 234, 248 to 254, and 273 to 276; these read NSGKST, SDSPGTT, and DTAG. Residues Ser-233 and Thr-254 each coordinate Mg(2+). Lys-441 provides a ligand contact to (6S)-5-formyl-5,6,7,8-tetrahydrofolate.

It belongs to the TRAFAC class TrmE-Era-EngA-EngB-Septin-like GTPase superfamily. TrmE GTPase family. In terms of assembly, homodimer. Heterotetramer of two MnmE and two MnmG subunits. K(+) is required as a cofactor.

The protein resides in the cytoplasm. Its function is as follows. Exhibits a very high intrinsic GTPase hydrolysis rate. Involved in the addition of a carboxymethylaminomethyl (cmnm) group at the wobble position (U34) of certain tRNAs, forming tRNA-cmnm(5)s(2)U34. This chain is tRNA modification GTPase MnmE, found in Methylobacterium radiotolerans (strain ATCC 27329 / DSM 1819 / JCM 2831 / NBRC 15690 / NCIMB 10815 / 0-1).